The primary structure comprises 334 residues: Nucleoid-associated protein YejK (334 aa).

Belongs to the YejK family.

The protein resides in the cytoplasm. It is found in the nucleoid. The sequence is that of Nucleoid-associated protein YejK from Escherichia fergusonii (strain ATCC 35469 / DSM 13698 / CCUG 18766 / IAM 14443 / JCM 21226 / LMG 7866 / NBRC 102419 / NCTC 12128 / CDC 0568-73).